We begin with the raw amino-acid sequence, 163 residues long: Flagellar assembly factor FliW (163 aa).

Over residues 136–156 (PFFETSEKKQSGLQRLERQPE) the composition is skewed to basic and acidic residues. The interval 136–163 (PFFETSEKKQSGLQRLERQPEKSVPPAG) is disordered.

It belongs to the FliW family. In terms of assembly, interacts with translational regulator CsrA and flagellin(s).

It localises to the cytoplasm. Acts as an anti-CsrA protein, binds CsrA and prevents it from repressing translation of its target genes, one of which is flagellin. Binds to flagellin and participates in the assembly of the flagellum. The polypeptide is Flagellar assembly factor FliW (Geotalea uraniireducens (strain Rf4) (Geobacter uraniireducens)).